The chain runs to 230 residues: MKFFALTTFLAATASALPTSNPAQELEARQLGRTTRDDLINGNSASCADVIFIYARGSTETGNLGTLGPSIASNLESAFGTDGVWIQGVGGAYRATLGDNALPRGTSSAAIREMLGLFQQANTKCPDATLIAGGYSQGAALAAASIEDLDSAIRDKIAGTVLFGYTKNLQNRGRIPNYPADRTKVFCNVGDLVCTGSLIVAAPHLAYGPDARGPAPEFLIEKVRAVRGSA.

The signal sequence occupies residues M1 to A16. Residues C47 and C125 are joined by a disulfide bond. Residue S136 is the Nucleophile of the active site. A disulfide bond links C187 and C194. The active site involves D191. Catalysis depends on H204, which acts as the Proton donor/acceptor.

The protein belongs to the cutinase family. In terms of processing, the 2 disulfide bonds play a critical role in holding the catalytic residues in juxta-position; reduction of the disulfide bridges results in the complete inactivation of the enzyme.

The protein localises to the secreted. It carries out the reaction cutin + H2O = cutin monomers.. Catalyzes the hydrolysis of complex carboxylic polyesters found in the cell wall of plants. Degrades cutin, a macromolecule that forms the structure of the plant cuticle. Allows pathogenic fungi to penetrate through the cuticular barrier into the host plant during the initial stage of fungal infection. This is Cutinase (CUTA) from Fusarium solani subsp. cucurbitae (Neocosmosporum cucurbitae).